Consider the following 148-residue polypeptide: MSKHERHNAIRELIAQRPIASQDELRRKLVRRGFDVTQATLSRDIHELRIYKGPGGYALPNGNGHDEQDDLPDVDEVMSSFGLKVKQAQNQLVLVTTAGSAQPVALAIDHEDWPEVVGTLAGDDTVLIICPDQKRATVLAERLEKIIG.

Belongs to the ArgR family.

The protein localises to the cytoplasm. The protein operates within amino-acid biosynthesis; L-arginine biosynthesis [regulation]. Regulates arginine biosynthesis genes. In Acidobacterium capsulatum (strain ATCC 51196 / DSM 11244 / BCRC 80197 / JCM 7670 / NBRC 15755 / NCIMB 13165 / 161), this protein is Arginine repressor.